The chain runs to 192 residues: MSSRDYMNTSVQEPPLDYSFKSVQMVQDLVTEEPRTGLRPVRHSKSGKSLTQSLWLNNNVLNDLKDFNQVVSQLLQHPENLAWIDLSFNDLTTIDPVLTTFFNLSVLYLHGNGIHRLGEVNKLAVLPRLRSLTLHGNPIEEEKGYRQYVLCNLPRITTFDFSGVTRADRSTAEVWKRMGIKPKKVRAKQDVL.

LRR repeat units follow at residues 49–71 (SLTQ…NQVV), 80–101 (NLAW…LTTF), and 103–124 (NLSV…NKLA). The LRRCT domain maps to 137-175 (NPIEEEKGYRQYVLCNLPRITTFDFSGVTRADRSTAEVW).

Widely expressed in adult and embryonic tissues. Expressed in the developing choroid plexus from 12.5 dpc and in the epithelium of the developing airway tract from 14.5 dpc. Also expressed in the postnatal inner ear.

The protein resides in the cytoplasm. This chain is Leucine-rich repeat-containing protein 51, found in Mus musculus (Mouse).